Consider the following 102-residue polypeptide: Small ribosomal subunit protein uS14 (102 aa).

It belongs to the universal ribosomal protein uS14 family. As to quaternary structure, part of the 30S ribosomal subunit. Contacts proteins S3 and S10.

In terms of biological role, binds 16S rRNA, required for the assembly of 30S particles and may also be responsible for determining the conformation of the 16S rRNA at the A site. The sequence is that of Small ribosomal subunit protein uS14 from Wolbachia sp. subsp. Brugia malayi (strain TRS).